Reading from the N-terminus, the 87-residue chain is Small ribosomal subunit protein bS20 (87 aa).

It belongs to the bacterial ribosomal protein bS20 family.

Binds directly to 16S ribosomal RNA. This Parvibaculum lavamentivorans (strain DS-1 / DSM 13023 / NCIMB 13966) protein is Small ribosomal subunit protein bS20.